The chain runs to 348 residues: S-adenosylmethionine:tRNA ribosyltransferase-isomerase (348 aa).

The protein belongs to the QueA family. As to quaternary structure, monomer.

The protein resides in the cytoplasm. The enzyme catalyses 7-aminomethyl-7-carbaguanosine(34) in tRNA + S-adenosyl-L-methionine = epoxyqueuosine(34) in tRNA + adenine + L-methionine + 2 H(+). It functions in the pathway tRNA modification; tRNA-queuosine biosynthesis. Transfers and isomerizes the ribose moiety from AdoMet to the 7-aminomethyl group of 7-deazaguanine (preQ1-tRNA) to give epoxyqueuosine (oQ-tRNA). This is S-adenosylmethionine:tRNA ribosyltransferase-isomerase from Polynucleobacter necessarius subsp. necessarius (strain STIR1).